The chain runs to 429 residues: Probable M18 family aminopeptidase 2 (429 aa).

Residues His82, His156, and His401 each coordinate Zn(2+).

It belongs to the peptidase M18 family. The cofactor is Zn(2+).

The chain is Probable M18 family aminopeptidase 2 from Pseudomonas savastanoi pv. phaseolicola (strain 1448A / Race 6) (Pseudomonas syringae pv. phaseolicola (strain 1448A / Race 6)).